The primary structure comprises 746 residues: 1,4-alpha-glucan branching enzyme GlgB (746 aa).

Aspartate 418 functions as the Nucleophile in the catalytic mechanism. Residue glutamate 471 is the Proton donor of the active site.

The protein belongs to the glycosyl hydrolase 13 family. GlgB subfamily. As to quaternary structure, monomer.

It catalyses the reaction Transfers a segment of a (1-&gt;4)-alpha-D-glucan chain to a primary hydroxy group in a similar glucan chain.. The protein operates within glycan biosynthesis; glycogen biosynthesis. Catalyzes the formation of the alpha-1,6-glucosidic linkages in glycogen by scission of a 1,4-alpha-linked oligosaccharide from growing alpha-1,4-glucan chains and the subsequent attachment of the oligosaccharide to the alpha-1,6 position. This Nitrosospira multiformis (strain ATCC 25196 / NCIMB 11849 / C 71) protein is 1,4-alpha-glucan branching enzyme GlgB.